Consider the following 448-residue polypeptide: Nicotinate phosphoribosyltransferase pncB1 (448 aa).

A disordered region spans residues 1–21 (MGPPPAARRREGEPDNQDPAG). Histidine 212 is subject to Phosphohistidine. The segment at 353-372 (RSSYKESPGGRKEALRRSRA) is disordered.

This sequence belongs to the NAPRTase family. In terms of processing, transiently phosphorylated on a His residue during the reaction cycle. Phosphorylation strongly increases the affinity for substrates and increases the rate of nicotinate D-ribonucleotide production. Dephosphorylation regenerates the low-affinity form of the enzyme, leading to product release.

It catalyses the reaction nicotinate + 5-phospho-alpha-D-ribose 1-diphosphate + ATP + H2O = nicotinate beta-D-ribonucleotide + ADP + phosphate + diphosphate. The protein operates within cofactor biosynthesis; NAD(+) biosynthesis; nicotinate D-ribonucleotide from nicotinate: step 1/1. Functionally, involved in the Preiss-Handler pathway, which is a recycling route that permits the salvage of free nicotinamide (NM) and nicotinic acid (Na) involved in the NAD biosynthesis. Catalyzes the synthesis of beta-nicotinate D-ribonucleotide from nicotinate and 5-phospho-D-ribose 1-phosphate at the expense of ATP. It is not able to use nicotinamide. PncB1 contributes to basal NAD level. The polypeptide is Nicotinate phosphoribosyltransferase pncB1 (pncB1) (Mycobacterium tuberculosis (strain ATCC 25618 / H37Rv)).